Consider the following 593-residue polypeptide: Regulatory protein NPR1 (593 aa).

Phosphoserine is present on residues Ser11, Ser15, Ser55, and Ser59. Residues 65-144 (SDAKLVLSDG…VYSSRVRPPP (80 aa)) enclose the BTB domain. The C2HC NPR-type zinc finger occupies 147–161 (VSECADENCCHVACR). Residues Cys150 and Cys155 each contribute to the Zn(2+) site. Cys156 is subject to S-nitrosocysteine. Zn(2+) is bound by residues His157 and Cys160. ANK repeat units follow at residues 229-258 (KSNVDMVSLEKSLPEELVKEIIDRRKELGL), 265-295 (KHVSNVHKALDSDDIELVKLLLKEDHTNLDD), 297-324 (CALHFAVAYCNVKTATDLLKLDLADVNH), 328-357 (RGYTVLHVAAMRKEPQLILSLLEKGASASE), and 361-397 (EGRTALMIAKQATMAVECNNIPEQCKHSLKGRLCVEI). The SIM3, required fo binding to SUMO3 and subsequent sumoylation signature appears at 345 to 348 (ILSL). Residues 387–525 (HSLKGRLCVE…DQIMNCEDLT (139 aa)) form a salicylic acid-binding core (SBC) region. Arg432 lines the salicylate pocket. A Nuclear localization signal motif is present at residues 537–554 (KRLQKKQRYMEIQETLKK). A disordered region spans residues 563 to 593 (LGNSSLTDSTSSTSKSTGGKRSNRKLSHRRR). Positions 566 to 579 (SSLTDSTSSTSKST) are enriched in low complexity. Positions 583–593 (RSNRKLSHRRR) are enriched in basic residues.

It belongs to the plant 'ANKYRIN-BTB/POZ' family. 'NPR1-like' subfamily. As to quaternary structure, homodimer. Oligomer of dimers in an uninduced quiescent state; disulfide-linked. Forms activated (i.e. sumoylated) homodimers and monomers upon systemic acquired resistance (SAR) induction. Interacts with TGA1, TGA3, TGA4, TGA5, TGA6, TGA7 and with reduced forms of TGA1 and TGA4. Activated homodimer binds two TGA3 dimers in the presence of DNA via its ANK 2 repeat (265-295), thus forming a TGA3(2)-NPR1(2)-TGA3(2) complex in which NPR1 serves as a transcription cofactor by bridging two transcription factor complexes in an enhanceosome. Interacts with NIMIN-1 and NIMIN-3 via its C-terminal region, and with NIMIN-2 via its N-terminal region. Interacts with SUMO3 but not with SUMO1 and SUMO2; this interaction is required for phosphorylation at Ser-11 and Ser-15, and triggers activation by sumoylation and subsequent degradation. Binds to NPR3 and NPR4; these interactions are promoted by association of salicylic acid (SA) with NPR3, but disrupted by SA association with NPR4, probably due to conformational changes. Binds to CUL3A, a core component of the cullin-RING ubiquitin ligases (CRL); this interaction requires NPR3 and NPR4. Interacts with NPR2 independently of SA. Binds to WRKY70 when unmodified (i.e. not sumoylated). In terms of processing, phosphorylation at Ser-55 and Ser-59 prevents sumoylation to ensure stability and quiescence. Phosphorylated at Ser-11 and Ser-15 in the nucleus; facilitates its recruitment to a cullin3-based ubiquitin ligase leading to polyubiquitination and subsequent CUL3/CSN-mediated degradation. This phosphorylation at Ser-11 and Ser-15 requires interaction with SUMO3, and promotes in turn activation by sumoylation and subsequent degradation. Post-translationally, ubiquitinated. In terms of processing, sumoylated by SUMO3 independently of an E3 ligase to activate defense gene expression by switching from association with WRKY transcriptional repressors (e.g. WRKY70) to TGA transcriptional activators (e.g. TGA3). Sumoylation is inhibited by phosphorylation at Ser-55 and Ser-59, but seems to promote phosphorylation at Ser-11 and Ser-15. Sumoylation also triggers degradation, making immune induction transient. The Cys-82-SH group reacts with Cys-216-SH of the other subunit to form an intermolecular disulfide. This disulfide might subsequently be reduced upon systemic acquired resistance (SAR) induction. Post-translationally, S-nitrosylation at Cys-156 facilitates its oligomerization.

It is found in the cytoplasm. The protein localises to the nucleus. The protein resides in the nuclear body. Its pathway is protein modification; protein ubiquitination. Its function is as follows. Salicylic acid (SA)-binding substrate-specific adapter of an E3 ubiquitin-protein ligase complex (CUL3-RBX1-BTB) which mediates the ubiquitination and subsequent proteasomal degradation of target proteins. Transcription cofactor that represses gene expression in the absence of salicylic acid (SA), when attached to negative cis-elements (W-box) with WRKY transcription factors (e.g. WRKY70), but stimulates gene expression upon activation by SA, when sumoylated and attached to positive cis-elements (as-1) with TGA transcription factors (e.g. TGA3), thus confering immunity through a series of gene regulations ending in a significant increase in antimicrobial and defense genes expression (e.g. PR-1 and PR-2). Binds to SA with low capacity; this leads to conformational changes. Key positive regulator of the SA-dependent signaling pathway that negatively regulates jasmonic acid (JA)-dependent signaling pathway. Controls the onset of systemic acquired resistance (SAR). Upon SAR induction, a biphasic change in cellular reduction potential occurs, resulting in reduction of the cytoplasmic oligomeric form to dimeric and monomeric forms, which accumulate in the nucleus and activate gene expression. Appears to control lesion expansion by acting as an inhibitor of programmed cell death (PCD) during effector-triggered immunity (ETI) that occurs in response to incompatible interaction with avirulent pathogenic bacteria (i.e. Pseudomonas syringae ES4326/avrRpt2) ending in a hypersensitive response (HR). Phosphorylated form is target of proteasome degradation. This chain is Regulatory protein NPR1, found in Arabidopsis thaliana (Mouse-ear cress).